Consider the following 250-residue polypeptide: Hydroxyacylglutathione hydrolase (250 aa).

Zn(2+) is bound by residues histidine 52, histidine 54, aspartate 56, histidine 57, histidine 107, aspartate 128, and histidine 166.

It belongs to the metallo-beta-lactamase superfamily. Glyoxalase II family. Monomer. It depends on Zn(2+) as a cofactor.

It catalyses the reaction an S-(2-hydroxyacyl)glutathione + H2O = a 2-hydroxy carboxylate + glutathione + H(+). The protein operates within secondary metabolite metabolism; methylglyoxal degradation; (R)-lactate from methylglyoxal: step 2/2. Functionally, thiolesterase that catalyzes the hydrolysis of S-D-lactoyl-glutathione to form glutathione and D-lactic acid. The protein is Hydroxyacylglutathione hydrolase of Neisseria gonorrhoeae (strain NCCP11945).